The chain runs to 192 residues: Thymidine kinase (192 aa).

Residues 9–16 (SAMNAGKS) and 87–90 (DECQ) each bind ATP. Catalysis depends on glutamate 88, which acts as the Proton acceptor. Zn(2+)-binding residues include cysteine 145, cysteine 147, cysteine 182, and histidine 185.

The protein belongs to the thymidine kinase family. As to quaternary structure, homotetramer.

The protein localises to the cytoplasm. The catalysed reaction is thymidine + ATP = dTMP + ADP + H(+). This is Thymidine kinase from Vibrio parahaemolyticus serotype O3:K6 (strain RIMD 2210633).